Here is a 43-residue protein sequence, read N- to C-terminus: Phi-Lf prophage-derived putative minor coat protein (43 aa).

This Xanthomonas campestris pv. campestris (strain ATCC 33913 / DSM 3586 / NCPPB 528 / LMG 568 / P 25) protein is Phi-Lf prophage-derived putative minor coat protein (gVII-1).